The primary structure comprises 300 residues: Bifunctional protein FolD 2 (300 aa).

Residues 165 to 167, S190, and I231 each bind NADP(+); that span reads GRS.

Belongs to the tetrahydrofolate dehydrogenase/cyclohydrolase family. In terms of assembly, homodimer.

It carries out the reaction (6R)-5,10-methylene-5,6,7,8-tetrahydrofolate + NADP(+) = (6R)-5,10-methenyltetrahydrofolate + NADPH. The catalysed reaction is (6R)-5,10-methenyltetrahydrofolate + H2O = (6R)-10-formyltetrahydrofolate + H(+). Its pathway is one-carbon metabolism; tetrahydrofolate interconversion. Catalyzes the oxidation of 5,10-methylenetetrahydrofolate to 5,10-methenyltetrahydrofolate and then the hydrolysis of 5,10-methenyltetrahydrofolate to 10-formyltetrahydrofolate. This chain is Bifunctional protein FolD 2, found in Pseudomonas syringae pv. syringae (strain B728a).